The sequence spans 254 residues: Probable electron transfer flavoprotein subunit beta (254 aa).

The protein belongs to the ETF beta-subunit/FixA family. In terms of assembly, heterodimer of an alpha and a beta subunit. It depends on FAD as a cofactor. The cofactor is AMP.

The protein localises to the mitochondrion matrix. The electron transfer flavoprotein serves as a specific electron acceptor for several dehydrogenases, including five acyl-CoA dehydrogenases, glutaryl-CoA and sarcosine dehydrogenase. It transfers the electrons to the main mitochondrial respiratory chain via ETF-ubiquinone oxidoreductase (ETF dehydrogenase). The sequence is that of Probable electron transfer flavoprotein subunit beta from Schizosaccharomyces pombe (strain 972 / ATCC 24843) (Fission yeast).